Reading from the N-terminus, the 243-residue chain is UPF0246 protein SpyM51747 (243 aa).

The protein belongs to the UPF0246 family.

This Streptococcus pyogenes serotype M5 (strain Manfredo) protein is UPF0246 protein SpyM51747.